Reading from the N-terminus, the 896-residue chain is Glutamate receptor 2.4 (896 aa).

Residues Met1–Gly24 form the signal peptide. The Extracellular portion of the chain corresponds to Gln25–Thr565. Asn26, Asn46, Asn53, Asn204, Asn267, Asn331, Asn341, and Asn527 each carry an N-linked (GlcNAc...) asparagine glycan. Residues Pro566–Leu586 traverse the membrane as a helical segment. Residues Glu587–Thr595 lie on the Cytoplasmic side of the membrane. The chain crosses the membrane as a helical span at residues Gly596–Ala616. Residues Pro617 to Arg620 are Cytoplasmic-facing. The helical transmembrane segment at Val621–Thr641 threads the bilayer. Residues Gln642–Ser815 lie on the Extracellular side of the membrane. Residues Phe816–Ile836 traverse the membrane as a helical segment. Topologically, residues Cys837 to Gly896 are cytoplasmic.

This sequence belongs to the glutamate-gated ion channel (TC 1.A.10.1) family. As to quaternary structure, may form heteromers. In terms of tissue distribution, expressed predominantly in roots.

It localises to the membrane. Functionally, glutamate-gated receptor that probably acts as a non-selective cation channel. May be involved in light-signal transduction and calcium homeostasis via the regulation of calcium influx into cells. This Arabidopsis thaliana (Mouse-ear cress) protein is Glutamate receptor 2.4 (GLR2.4).